The sequence spans 219 residues: Ribose-5-phosphate isomerase A (219 aa).

Residues 28 to 31 (TGST), 81 to 84 (DGAD), and 94 to 97 (KGGG) each bind substrate. Glutamate 103 serves as the catalytic Proton acceptor. Residue lysine 121 coordinates substrate.

The protein belongs to the ribose 5-phosphate isomerase family. In terms of assembly, homodimer.

It catalyses the reaction aldehydo-D-ribose 5-phosphate = D-ribulose 5-phosphate. Its pathway is carbohydrate degradation; pentose phosphate pathway; D-ribose 5-phosphate from D-ribulose 5-phosphate (non-oxidative stage): step 1/1. Its function is as follows. Catalyzes the reversible conversion of ribose-5-phosphate to ribulose 5-phosphate. The chain is Ribose-5-phosphate isomerase A from Shewanella oneidensis (strain ATCC 700550 / JCM 31522 / CIP 106686 / LMG 19005 / NCIMB 14063 / MR-1).